The sequence spans 262 residues: MIFVLDVGNTNAVLGVFEEGELRQHWRMETDRHKTEDEYGMLVKQLLEHEGLSFEDVKGIIVSSVVPPIMFALERMCEKYFKIKPLVVGPGIKTGLNIKYENPREVGADRIVNAVAGIHLYGSPLIIVDFGTATTYCYINEEKHYMGGVITPGIMISAEALYSRAAKLPRIEITKPSSVVGKNTVSAMQSGILYGYVGQVEGIVKRMKEEAKQEPKVIATGGLAKLISEESNVIDVVDPFLTLKGLYMLYERNANLQHEKGE.

Residue aspartate 6 to valine 13 participates in ATP binding. Residues tyrosine 100 and glycine 107 to arginine 110 each bind substrate. Catalysis depends on aspartate 109, which acts as the Proton acceptor. Residue aspartate 129 participates in K(+) binding. Residue threonine 132 participates in ATP binding. Position 184 (threonine 184) interacts with substrate.

This sequence belongs to the type III pantothenate kinase family. In terms of assembly, homodimer. NH4(+) serves as cofactor. K(+) is required as a cofactor.

Its subcellular location is the cytoplasm. It carries out the reaction (R)-pantothenate + ATP = (R)-4'-phosphopantothenate + ADP + H(+). It functions in the pathway cofactor biosynthesis; coenzyme A biosynthesis; CoA from (R)-pantothenate: step 1/5. Catalyzes the phosphorylation of pantothenate (Pan), the first step in CoA biosynthesis. In Bacillus anthracis (strain A0248), this protein is Type III pantothenate kinase.